Here is a 27-residue protein sequence, read N- to C-terminus: Defensin-like protein 1 (27 aa).

Pyrrolidone carboxylic acid is present on Gln1.

Belongs to the DEFL family. As to quaternary structure, forms oligomers in its native state.

Functionally, possesses antifungal activity sensitive to inorganic cations. The protein is Defensin-like protein 1 of Brassica campestris (Field mustard).